The sequence spans 2258 residues: Genome polyprotein 1 (2258 aa).

The Helicase ATP-binding domain occupies 439 to 597; that stretch reads SMAQEAKQWS…AVRRYEIKTV (159 aa). Residue 487 to 494 coordinates ATP; sequence RAATVNVT. Residues 612–778 form the Helicase C-terminal domain; it reads DKENSLYVLQ…GVQFYINEHF (167 aa). Tyr1141 carries the post-translational modification O-(5'-phospho-RNA)-tyrosine. One can recognise a Peptidase C4 domain in the interval 1257–1476; it reads ATLEGMTMKP…TKPRNMQSAP (220 aa). Residues His1302, Asp1338, and Cys1405 each act as for nuclear inclusion protein A activity in the active site. The RdRp catalytic domain occupies 1745–1869; that stretch reads WTHGSGDGSR…AMSPSFMVKF (125 aa). 2 disordered regions span residues 2027-2047 and 2233-2258; these read NMAA…RGTS and TSEQ…ALLR. Residues 2242–2258 are compositionally biased toward basic and acidic residues; sequence TETRRRNDYDGHEALLR.

The protein belongs to the bymoviruses polyprotein 1 family. Post-translationally, VPg is uridylylated by the polymerase and is covalently attached to the 5'-end of the genomic RNA. This uridylylated form acts as a nucleotide-peptide primer for the polymerase. The viral RNA1 of bymoviruses is expressed as a single polyprotein which undergoes post-translational proteolytic processing by the main proteinase NIa-pro resulting in the production of at least eight individual proteins.

Its subcellular location is the host cytoplasmic vesicle. It is found in the virion. It carries out the reaction RNA(n) + a ribonucleoside 5'-triphosphate = RNA(n+1) + diphosphate. It catalyses the reaction Hydrolyzes glutaminyl bonds, and activity is further restricted by preferences for the amino acids in P6 - P1' that vary with the species of potyvirus, e.g. Glu-Xaa-Xaa-Tyr-Xaa-Gln-|-(Ser or Gly) for the enzyme from tobacco etch virus. The natural substrate is the viral polyprotein, but other proteins and oligopeptides containing the appropriate consensus sequence are also cleaved.. Its function is as follows. Indispensable for virus replication. Functionally, mediates the cap-independent, EIF4E-dependent translation of viral genomic RNAs. Binds to the cap-binding site of host EIF4E and thus interferes with the host EIF4E-dependent mRNA export and translation. VPg-RNA directly binds EIF4E and is a template for transcription. Also forms trimeric complexes with EIF4E-EIF4G, which are templates for translation. In terms of biological role, has RNA-binding and proteolytic activities. An RNA-dependent RNA polymerase that plays an essential role in the virus replication. This chain is Genome polyprotein 1, found in Barley mild mosaic virus (strain Na1) (BaMMV).